Reading from the N-terminus, the 1331-residue chain is X-linked retinitis pigmentosa GTPase regulator-interacting protein 1 (1331 aa).

Disordered regions lie at residues 1 to 165, 183 to 220, and 351 to 374; these read MQHL…PPAF, SQLTHTMTTDSTHVEEIPRSPEKTSKVEKPEQRSSEEC, and HQPLDSSHQPHWSTELTGKQLPPQ. A compositionally biased stretch (basic and acidic residues) spans 41 to 67; sequence NQKELNCRRLHLHEEPTLVKEPSPKQR. Composition is skewed to polar residues over residues 77–86 and 183–193; these read VQRSTTTQPD and SQLTHTMTTDS. Positions 194–220 are enriched in basic and acidic residues; sequence THVEEIPRSPEKTSKVEKPEQRSSEEC. 2 coiled-coil regions span residues 236-352 and 498-546; these read ELIR…SSHQ and MCYQ…LRSH. Residues 351–367 are compositionally biased toward polar residues; sequence HQPLDSSHQPHWSTELT. The C2 domain maps to 745–870; sequence GARKVQSNES…AQNKSIKGDF (126 aa). Disordered stretches follow at residues 899-1057 and 1088-1146; these read FQMS…VQDK and AEDG…SDDI. A coiled-coil region spans residues 908–999; sequence EGEEKEEEGG…DVLEASFTEE (92 aa). Residues 910-988 show a composition bias toward acidic residues; sequence EEKEEEGGEE…EEEEEEEDEN (79 aa). Basic and acidic residues-rich tracts occupy residues 1022-1039 and 1088-1115; these read PEKRKPPVIAEKKEREHQ and AEDGGLKAQDKREEPPSPRSALRQEHPS. Residues 1129-1141 show a composition bias toward polar residues; it reads CEQASEVSETQTT. The interval 1136-1326 is interaction with RPGR; the sequence is SETQTTDSDD…ALHGIYKEMT (191 aa).

The protein belongs to the RPGRIP1 family. In terms of assembly, interacts with NPHP4. Interacts with NEK4. Forms homodimers and elongated homopolymers. Interacts with RPGR. Interacts with SPATA7. Interacts with CEP290/NPHP6; mediating the association between RPGR and CEP290/NPHP6. In terms of tissue distribution, expressed in the retina (at protein level).

It localises to the cell projection. The protein resides in the cilium. Functionally, may function as scaffolding protein. Required for normal location of RPGR at the connecting cilium of photoreceptor cells. Required for normal disk morphogenesis and disk organization in the outer segment of photoreceptor cells and for survival of photoreceptor cells. The sequence is that of X-linked retinitis pigmentosa GTPase regulator-interacting protein 1 (Rpgrip1) from Mus musculus (Mouse).